The chain runs to 775 residues: Putative ankyrin repeat protein RBE_0801 (775 aa).

6 ANK repeats span residues 66–95 (HSLP…ENTE), 300–329 (ATTV…KVEN), 331–356 (ILQE…IKSF), 357–385 (TNDY…NIVG), 447–476 (IPDV…SFDF), and 523–552 (GDDK…KQGI).

The polypeptide is Putative ankyrin repeat protein RBE_0801 (Rickettsia bellii (strain RML369-C)).